A 225-amino-acid chain; its full sequence is UPF0173 metal-dependent hydrolase PH1671 (225 aa).

This sequence belongs to the UPF0173 family.

In Pyrococcus horikoshii (strain ATCC 700860 / DSM 12428 / JCM 9974 / NBRC 100139 / OT-3), this protein is UPF0173 metal-dependent hydrolase PH1671.